The following is a 185-amino-acid chain: Chromobox protein homolog 1 (185 aa).

Glycyl lysine isopeptide (Lys-Gly) (interchain with G-Cter in SUMO2) cross-links involve residues Lys9 and Lys33. In terms of domain architecture, Chromo 1 spans 21–79 (YVVEKVLDRRVVKGKVEYLLKWKGFSDEDNTWEPEENLDCPDLIAEFLQSQKTAHETDK). Positions 63–124 (LIAEFLQSQK…RGLEPERIIG (62 aa)) are disordered. Positions 73-89 (TAHETDKSEGGKRKADS) are enriched in basic and acidic residues. 2 positions are modified to phosphoserine: Ser89 and Ser91. Residues 96-121 (EESKPKKKKEESEKPRGFARGLEPER) show a composition bias toward basic and acidic residues. Glycyl lysine isopeptide (Lys-Gly) (interchain with G-Cter in SUMO2) cross-links involve residues Lys99 and Lys150. The 59-residue stretch at 117–175 (LEPERIIGATDSSGELMFLMKWKNSDEADLVPAKEANVKCPQVVISFYEERLTWHSYPS) folds into the Chromo 2; shadow subtype domain. Ser175 is modified (phosphoserine).

Homodimer. Interacts directly with CHAF1A, EMSY, LBR, TIF1/TIF1A and TRIM28/TIF1B PXVXL motif via the chromoshadow domain. Interacts directly with histone H3 methylated at 'Lys-9' via the chromo domain. Interacts with SUV39H1 and SETDB1, KMT5B and KMT5C. Interacts with PRDM6. Interacts with POGZ. Interacts with CHAMP1. Interacts with INCENP. Interacts with SGO1; the CBX1 homodimer binds to one molecule of SGO1. Interacts with LRIF1 (via PxVxL motif). Interacts with HDGFL2. Interacts with CHD3. Interacts with CHD4. Not phosphorylated. Post-translationally, ubiquitinated. As to expression, expressed in all adult and embryonic tissues.

The protein resides in the nucleus. Its function is as follows. Component of heterochromatin. Recognizes and binds histone H3 tails methylated at 'Lys-9', leading to epigenetic repression. Interaction with lamin B receptor (LBR) can contribute to the association of the heterochromatin with the inner nuclear membrane. The polypeptide is Chromobox protein homolog 1 (CBX1) (Homo sapiens (Human)).